The primary structure comprises 381 residues: UDP-4-amino-4-deoxy-L-arabinose--oxoglutarate aminotransferase (381 aa).

Lysine 182 bears the N6-(pyridoxal phosphate)lysine mark.

This sequence belongs to the DegT/DnrJ/EryC1 family. ArnB subfamily. As to quaternary structure, homodimer. Pyridoxal 5'-phosphate serves as cofactor.

It carries out the reaction UDP-4-amino-4-deoxy-beta-L-arabinose + 2-oxoglutarate = UDP-beta-L-threo-pentopyranos-4-ulose + L-glutamate. It functions in the pathway nucleotide-sugar biosynthesis; UDP-4-deoxy-4-formamido-beta-L-arabinose biosynthesis; UDP-4-deoxy-4-formamido-beta-L-arabinose from UDP-alpha-D-glucuronate: step 2/3. The protein operates within bacterial outer membrane biogenesis; lipopolysaccharide biosynthesis. Its function is as follows. Catalyzes the conversion of UDP-4-keto-arabinose (UDP-Ara4O) to UDP-4-amino-4-deoxy-L-arabinose (UDP-L-Ara4N). The modified arabinose is attached to lipid A and is required for resistance to polymyxin and cationic antimicrobial peptides. The protein is UDP-4-amino-4-deoxy-L-arabinose--oxoglutarate aminotransferase of Photorhabdus laumondii subsp. laumondii (strain DSM 15139 / CIP 105565 / TT01) (Photorhabdus luminescens subsp. laumondii).